We begin with the raw amino-acid sequence, 195 residues long: Probable prefoldin subunit 3 (195 aa).

The protein belongs to the prefoldin subunit alpha family. In terms of assembly, heterohexamer of two PFD-alpha type and four PFD-beta type subunits.

In terms of biological role, binds specifically to cytosolic chaperonin (c-CPN) and transfers target proteins to it. Binds to nascent polypeptide chain and promotes folding in an environment in which there are many competing pathways for nonnative proteins. In Dictyostelium discoideum (Social amoeba), this protein is Probable prefoldin subunit 3 (pfdn3).